Here is a 244-residue protein sequence, read N- to C-terminus: UPF0246 protein FMG_1068 (244 aa).

It belongs to the UPF0246 family.

This chain is UPF0246 protein FMG_1068, found in Finegoldia magna (strain ATCC 29328 / DSM 20472 / WAL 2508) (Peptostreptococcus magnus).